Here is a 1196-residue protein sequence, read N- to C-terminus: Sorbin and SH3 domain-containing protein 2 (1196 aa).

2 disordered regions span residues 25–57 (VQSSPNLLAAGRESHSPDSAWRSYNGRNPETLN) and 75–95 (PNLQDKKSPTQSHITINGNSG). 3 positions are modified to phosphoserine: Ser-27, Ser-28, and Ser-40. Polar residues predominate over residues 83–92 (PTQSHITING). 2 positions are modified to phosphoserine: Ser-130 and Ser-143. At Met-148 the chain carries Alanine amide. The SoHo domain maps to 166-227 (VIKAPHYPGI…YNTPYTYNAG (62 aa)). Residues 235–247 (AQSHPAAKTQTYR) are compositionally biased toward polar residues. 2 disordered regions span residues 235–314 (AQSH…EPGK) and 329–407 (SSID…GDDS). Basic and acidic residues-rich tracts occupy residues 252–262 (SHSDNGTDAFK) and 276–312 (RPRDQSSTEKHDWDPPDRKVDTRKFRSEPRSIFEYEP). Ser-254 is subject to Phosphoserine. Polar residues predominate over residues 329-343 (SSIDRSLERPSSSAS). Phosphoserine is present on residues Ser-334, Ser-340, Ser-343, and Ser-354. Thr-372 is modified (phosphothreonine). Ser-382 is subject to Phosphoserine. Positions 382–399 (SSSTFTTSFISSSPSSPS) are enriched in low complexity. Thr-387 carries the post-translational modification Phosphothreonine. Ser-392, Ser-393, Ser-394, Ser-396, Ser-397, Ser-399, Ser-478, Ser-589, Ser-592, Ser-645, Ser-648, Ser-844, and Ser-938 each carry phosphoserine. The tract at residues 929-958 (QDHESPRSYSSTLTDLGRSVSRERRGTPEK) is disordered. The span at 948-958 (VSRERRGTPEK) shows a compositional bias: basic and acidic residues. 2 SH3 domains span residues 959 to 1018 (EVKL…KLTP) and 1034 to 1095 (GEIG…VVKR). A phosphoserine mark is found at Ser-1113 and Ser-1119. The 60-residue stretch at 1137 to 1196 (GGGEPFQALYNYTPRNEDELELRESDVVDVMEKCDDGWFVGTSRRTKFFGTFPGNYVKRL) folds into the SH3 3 domain.

Interacts with ABL1/c-Abl, ABL2/v-Abl/Arg, ACTN, CBL and PALLD. Interacts with ABL, CBL, DNM1, DNM2, FLOT1, AFDN, PTK2B/PYK2, SAPAP, SPTAN1, SYNJ1, SYNJ2, VCL/vinculin and WASF. Interacts with PTPN12 and WASF1 via its SH3 domains; this interaction may mediate the partial PTPN12 and WASF1 translocation to focal adhesion sites. In terms of processing, ubiquitinated by CBL. In terms of tissue distribution, expressed in brain; found in synapses in cerebellum.

The protein localises to the cytoplasm. It localises to the perinuclear region. Its subcellular location is the apical cell membrane. The protein resides in the cell junction. It is found in the focal adhesion. The protein localises to the cell projection. It localises to the lamellipodium. Its function is as follows. Adapter protein that plays a role in the assembling of signaling complexes, being a link between ABL kinases and actin cytoskeleton. Can form complex with ABL1 and CBL, thus promoting ubiquitination and degradation of ABL1. May play a role in the regulation of pancreatic cell adhesion, possibly by acting on WASF1 phosphorylation, enhancing phosphorylation by ABL1, as well as dephosphorylation by PTPN12. Isoform 2 increases water and sodium absorption in the intestine and gall-bladder. This Rattus norvegicus (Rat) protein is Sorbin and SH3 domain-containing protein 2 (Sorbs2).